The primary structure comprises 3198 residues: Helicase domino (3198 aa).

The span at 1 to 12 (MNEGNSAGGGHE) shows a compositional bias: gly residues. Disordered regions lie at residues 1–27 (MNEG…RVTP), 93–112 (LPQQ…APAH), and 119–148 (SSTI…AASI). A compositionally biased stretch (basic and acidic residues) spans 134 to 143 (QRLDDNEDRT). The stretch at 187 to 212 (KKRILQQKLQILRNLKERHLENVSEY) forms a coiled coil. 2 disordered regions span residues 256–350 (TSAA…SATS) and 391–474 (GGTP…TPNS). Composition is skewed to polar residues over residues 264–281 (QNQK…SSLV) and 297–329 (NISN…TESN). Positions 330–350 (SSTTVPGTATSGAATSTSATS) are enriched in low complexity. Residues 391–404 (GGTPLLPCNTSAGS) are compositionally biased toward polar residues. Positions 452-464 (PGTPTSGSLLSPA) are enriched in low complexity. Residues 507-579 (LPKLQEPSRP…QELQLKRVAS (73 aa)) form the HSA domain. The segment at 635-848 (NKSVADTPSL…DMEEQDEQED (214 aa)) is disordered. Polar residues predominate over residues 638-650 (VADTPSLNSSRLT). Positions 652–664 (PKRESDDDFRPES) are enriched in basic and acidic residues. A phosphoserine mark is found at S656, S664, and S666. A coiled-coil region spans residues 666-696 (SEDDEETIAKAEEDAADVKEEVTALAKESEM). 2 stretches are compositionally biased toward basic and acidic residues: residues 672–695 (TIAK…KESE) and 711–721 (ENRDKLMKEEQ). Phosphothreonine is present on T729. Phosphoserine occurs at positions 733, 736, and 744. A coiled-coil region spans residues 741 to 784 (KEASDDDENTISKQEEAEQEIDHKKEIDELEADNDLSVEQLLAK). The segment covering 753 to 767 (KQEEAEQEIDHKKEI) has biased composition (basic and acidic residues). Over residues 805-831 (LDSDDDSTAVDSTEESEDAATEDEEDL) the composition is skewed to acidic residues. T838 carries the post-translational modification Phosphothreonine. The region spanning 926–1091 (VTMNERKLNG…WSLMHFLMPY (166 aa)) is the Helicase ATP-binding domain. 939 to 946 (DEMGLGKT) lines the ATP pocket. A disordered region spans residues 1471–1492 (VQKQSIANGKTEPEEETEAEDP). The Helicase C-terminal domain maps to 1662-1812 (TMDRLLRQLK…DMAIEGGNFT (151 aa)). The interval 1828-1856 (EQSEQDESSQEKSENKDRIVATTTLSDTP) is disordered. The span at 1836–1846 (SQEKSENKDRI) shows a compositional bias: basic and acidic residues. Residues 1951 to 1996 (AAWTAEQLRAAEAELEAQKREWEANRLAAMHKEEELLKQETEAEEM) adopt a coiled-coil conformation. Positions 2061–2100 (KEHKRSRTDAGYDGSRRPNKMRREDNYVPPRSLFDRPTPQ) are disordered. Over residues 2067-2086 (RTDAGYDGSRRPNKMRREDN) the composition is skewed to basic and acidic residues. The Myb-like domain maps to 2136–2205 (TEPEAMAEWC…QCRWRYETHI (70 aa)). The interval 2318 to 2362 (IREKQRGQQMSQPPVGVGVVQQMQQQSQQQQQPAPPPLPQQQQPQ) is disordered. Residues 2325–2349 (QQMSQPPVGVGVVQQMQQQSQQQQQ) show a composition bias toward low complexity.

It belongs to the SNF2/RAD54 helicase family. SWR1 subfamily. In terms of assembly, component of the Tip60 chromatin-remodeling complex which contains Domino, Tip60, Tra1, Brd8, E(Pc), DMAP1, Pontin, Reptin, Ing3, Act87E, BAP55, Mrg15, MrgBP, Gas41 and YL-1. In terms of tissue distribution, isoform B is present at high levels in ovary, in follicle cells, nurse cells and oocyte. Isoform B is also present in germline and somatic stem cells from the germarium. Isoform A is undetectable in adult ovary (at protein level).

The protein resides in the nucleus. Mediates the ATP-dependent exchange of unmodified histone H2AV for its phosphorylated and acetylated form H2AVK5acS138ph, leading to transcriptional regulation of selected genes by chromatin remodeling. Involved in Notch signaling. Represses E2F target genes. Required for somatic stem cell self-renewal but not for germline stem cell self-renewal. Involved in oogenesis. The protein is Helicase domino (dom) of Drosophila melanogaster (Fruit fly).